Consider the following 369-residue polypeptide: Histidinol-phosphate aminotransferase 2 (369 aa).

Lys-231 carries the N6-(pyridoxal phosphate)lysine modification.

The protein belongs to the class-II pyridoxal-phosphate-dependent aminotransferase family. Histidinol-phosphate aminotransferase subfamily. In terms of assembly, homodimer. The cofactor is pyridoxal 5'-phosphate.

It carries out the reaction L-histidinol phosphate + 2-oxoglutarate = 3-(imidazol-4-yl)-2-oxopropyl phosphate + L-glutamate. The protein operates within amino-acid biosynthesis; L-histidine biosynthesis; L-histidine from 5-phospho-alpha-D-ribose 1-diphosphate: step 7/9. The sequence is that of Histidinol-phosphate aminotransferase 2 from Legionella pneumophila (strain Lens).